Consider the following 88-residue polypeptide: UPF0147 protein Ta0600 (88 aa).

This sequence belongs to the UPF0147 family.

In Thermoplasma acidophilum (strain ATCC 25905 / DSM 1728 / JCM 9062 / NBRC 15155 / AMRC-C165), this protein is UPF0147 protein Ta0600.